Consider the following 308-residue polypeptide: UDP-N-acetylenolpyruvoylglucosamine reductase (308 aa).

The region spanning 32 to 196 (VGGPAARLYK…ISAKLQLSPG (165 aa)) is the FAD-binding PCMH-type domain. The active site involves Arg-176. Catalysis depends on Ser-225, which acts as the Proton donor. Glu-296 is a catalytic residue.

The protein belongs to the MurB family. Requires FAD as cofactor.

Its subcellular location is the cytoplasm. It catalyses the reaction UDP-N-acetyl-alpha-D-muramate + NADP(+) = UDP-N-acetyl-3-O-(1-carboxyvinyl)-alpha-D-glucosamine + NADPH + H(+). Its pathway is cell wall biogenesis; peptidoglycan biosynthesis. Cell wall formation. The protein is UDP-N-acetylenolpyruvoylglucosamine reductase of Legionella pneumophila (strain Lens).